A 332-amino-acid chain; its full sequence is Ferredoxin--NADP reductase (332 aa).

FAD-binding residues include D33, Q41, Y46, A86, I121, D282, and S325.

The protein belongs to the ferredoxin--NADP reductase type 2 family. Homodimer. The cofactor is FAD.

It catalyses the reaction 2 reduced [2Fe-2S]-[ferredoxin] + NADP(+) + H(+) = 2 oxidized [2Fe-2S]-[ferredoxin] + NADPH. This Metallosphaera sedula (strain ATCC 51363 / DSM 5348 / JCM 9185 / NBRC 15509 / TH2) protein is Ferredoxin--NADP reductase.